We begin with the raw amino-acid sequence, 376 residues long: Glucose-1-phosphate adenylyltransferase (376 aa).

Alpha-D-glucose 1-phosphate is bound by residues Tyr101, Gly166, 181-182 (EK), and Ser192.

This sequence belongs to the bacterial/plant glucose-1-phosphate adenylyltransferase family. Homotetramer.

The enzyme catalyses alpha-D-glucose 1-phosphate + ATP + H(+) = ADP-alpha-D-glucose + diphosphate. Its pathway is glycan biosynthesis; glycogen biosynthesis. Its function is as follows. Involved in the biosynthesis of ADP-glucose, a building block required for the elongation reactions to produce glycogen. Catalyzes the reaction between ATP and alpha-D-glucose 1-phosphate (G1P) to produce pyrophosphate and ADP-Glc. In Bacillus cereus (strain ATCC 14579 / DSM 31 / CCUG 7414 / JCM 2152 / NBRC 15305 / NCIMB 9373 / NCTC 2599 / NRRL B-3711), this protein is Glucose-1-phosphate adenylyltransferase.